The primary structure comprises 72 residues: Translation initiation factor IF-1 (72 aa).

The S1-like domain occupies 1–72 (MSKEDVIELE…TRGRIVWRSK (72 aa)).

Belongs to the IF-1 family. In terms of assembly, component of the 30S ribosomal translation pre-initiation complex which assembles on the 30S ribosome in the order IF-2 and IF-3, IF-1 and N-formylmethionyl-tRNA(fMet); mRNA recruitment can occur at any time during PIC assembly.

The protein localises to the cytoplasm. Functionally, one of the essential components for the initiation of protein synthesis. Stabilizes the binding of IF-2 and IF-3 on the 30S subunit to which N-formylmethionyl-tRNA(fMet) subsequently binds. Helps modulate mRNA selection, yielding the 30S pre-initiation complex (PIC). Upon addition of the 50S ribosomal subunit IF-1, IF-2 and IF-3 are released leaving the mature 70S translation initiation complex. This is Translation initiation factor IF-1 from Caldicellulosiruptor saccharolyticus (strain ATCC 43494 / DSM 8903 / Tp8T 6331).